A 642-amino-acid chain; its full sequence is Tigger transposable element derived 5 (642 aa).

A disordered region spans residues 1 to 54 (MYPASPSAGPALHPVPHRARLPRPRCLAEPPRSPAPGPGSTARPPPPAPGPRPR). The segment covering 31 to 52 (PRSPAPGPGSTARPPPPAPGPR) has biased composition (pro residues). An HTH psq-type domain is found at 56–107 (AVKMTFRKAYSIKDKLQAIERVKGGERQASVCRDFGVPGGTLRGWLKDEPKL). DNA-binding regions (H-T-H motif) lie at residues 83–103 (QASV…WLKD) and 154–187 (PVIQ…WQKR). The HTH CENPB-type domain maps to 121–194 (QRKKMRLANE…QKRHGISSQR (74 aa)). Positions 198–208 (EAEPPVAGPAP) are enriched in low complexity. Residues 198–230 (EAEPPVAGPAPVKEEPAQPSSAGLLLDGTPATL) are disordered. Residues 239-364 (DEQIYNANVT…CLQQKAVLLV (126 aa)) form the DDE-1 domain. A disordered region spans residues 543–583 (GLPEGCGEEVAPAAPPSPASLPSSIGAGEEEEEEATEQGGV).

The protein belongs to the tigger transposable element derived protein family.

It localises to the nucleus. The sequence is that of Tigger transposable element derived 5 (Tigd5) from Rattus norvegicus (Rat).